Consider the following 323-residue polypeptide: Glyoxylate/hydroxypyruvate reductase HPR3 (323 aa).

NADP(+)-binding positions include 160-163, 182-184, and 238-240; these read LGSI, SRS, and VGR. Active-site residues include Arg-240 and Glu-269. Catalysis depends on His-287, which acts as the Proton donor. An NADP(+)-binding site is contributed by 287–289; that stretch reads HFA.

It belongs to the D-isomer specific 2-hydroxyacid dehydrogenase family. GyaR subfamily. In terms of assembly, homodimer.

It catalyses the reaction glycolate + NADP(+) = glyoxylate + NADPH + H(+). It carries out the reaction (R)-glycerate + NADP(+) = 3-hydroxypyruvate + NADPH + H(+). With respect to regulation, inhibited by oxalate. Its function is as follows. Catalyzes the NADPH-dependent reduction of glyoxylate and hydroxypyruvate (HP) into glycolate and glycerate. Mostly active in the presence of NADPH and glyoxylate. The sequence is that of Glyoxylate/hydroxypyruvate reductase HPR3 (HPR3) from Arabidopsis thaliana (Mouse-ear cress).